The primary structure comprises 92 residues: DNA-directed RNA polymerase subunit Rpo5 (92 aa).

The protein belongs to the archaeal Rpo5/eukaryotic RPB5 RNA polymerase subunit family. In terms of assembly, part of the RNA polymerase complex.

The protein localises to the cytoplasm. The catalysed reaction is RNA(n) + a ribonucleoside 5'-triphosphate = RNA(n+1) + diphosphate. DNA-dependent RNA polymerase (RNAP) catalyzes the transcription of DNA into RNA using the four ribonucleoside triphosphates as substrates. The sequence is that of DNA-directed RNA polymerase subunit Rpo5 from Methanopyrus kandleri (strain AV19 / DSM 6324 / JCM 9639 / NBRC 100938).